We begin with the raw amino-acid sequence, 422 residues long: 3-phosphoshikimate 1-carboxyvinyltransferase (422 aa).

3 residues coordinate 3-phosphoshikimate: Lys-20, Ser-21, and Arg-25. A phosphoenolpyruvate-binding site is contributed by Lys-20. Residues Gly-92 and Arg-120 each coordinate phosphoenolpyruvate. The 3-phosphoshikimate site is built by Ser-163, Ser-164, Gln-165, Ser-191, Asp-304, and Lys-331. Gln-165 is a phosphoenolpyruvate binding site. Asp-304 serves as the catalytic Proton acceptor. 2 residues coordinate phosphoenolpyruvate: Arg-335 and Arg-377.

Belongs to the EPSP synthase family. Monomer.

It is found in the cytoplasm. It catalyses the reaction 3-phosphoshikimate + phosphoenolpyruvate = 5-O-(1-carboxyvinyl)-3-phosphoshikimate + phosphate. It functions in the pathway metabolic intermediate biosynthesis; chorismate biosynthesis. In terms of biological role, catalyzes the transfer of the enolpyruvyl moiety of phosphoenolpyruvate (PEP) to the 5-hydroxyl of shikimate-3-phosphate (S3P) to produce enolpyruvyl shikimate-3-phosphate and inorganic phosphate. The protein is 3-phosphoshikimate 1-carboxyvinyltransferase of Methanocorpusculum labreanum (strain ATCC 43576 / DSM 4855 / Z).